Consider the following 460-residue polypeptide: MQKLLSVIPSVDKLIKQLAGIALIQQYGHQAFVAQARQVIDSLRQHILTHQSLPVDQPADNLLSLIATNLQQTQQIAMKKVFNLTGTILHTNLGRAIWSEAAITAASDAMRHHSALEFDIEAGKRSHRDNTISQLLCEITGAEAACVVNNNAAAVLLMLATFAKGKEVIVSRGELVEIGGAFRIPDIMQQAGCKLVEVGTTNRTHLKDYRAAINENTALLMKVHTSNYQIQGFTHSVSEQQLVELGQEVGLPVMSDLGSGSLIDMATFGLPAEPLVQQKVASGVALVTFSADKLLGGPQAGIIVGKKADIEALQAHPLKRVLRCDKVILAGLEATLRHYLLPDQLTTHLPTLSLLTQSIDHLRVKATRLQNSLSKRLDARYHLQIEQSLAQIGSGALPTERLASLAVTITAPTQRDLLQLEQQFKMLKYPIIGRFAEQKLWLDLRSVAQFDQLIEMLEEK.

The residue at position 293 (Lys293) is an N6-(pyridoxal phosphate)lysine.

It belongs to the SelA family. Pyridoxal 5'-phosphate is required as a cofactor.

Its subcellular location is the cytoplasm. The catalysed reaction is L-seryl-tRNA(Sec) + selenophosphate + H(+) = L-selenocysteinyl-tRNA(Sec) + phosphate. It participates in aminoacyl-tRNA biosynthesis; selenocysteinyl-tRNA(Sec) biosynthesis; selenocysteinyl-tRNA(Sec) from L-seryl-tRNA(Sec) (bacterial route): step 1/1. Its function is as follows. Converts seryl-tRNA(Sec) to selenocysteinyl-tRNA(Sec) required for selenoprotein biosynthesis. The protein is L-seryl-tRNA(Sec) selenium transferase of Haemophilus ducreyi (strain 35000HP / ATCC 700724).